The sequence spans 360 residues: Phospho-N-acetylmuramoyl-pentapeptide-transferase (360 aa).

Transmembrane regions (helical) follow at residues 21–41, 74–94, 97–117, 135–155, 168–188, 199–219, 236–256, 263–283, 288–308, and 338–358; these read YVTF…LWWG, MGGL…GDLG, YVWV…IDDY, LLQS…ADTA, VMPQ…VGSS, GLAI…AYLS, AGEL…FLWF, VFMG…IAVL, ILLV…ILQV, and VIVR…ATLK.

This sequence belongs to the glycosyltransferase 4 family. MraY subfamily. Mg(2+) is required as a cofactor.

It localises to the cell inner membrane. It catalyses the reaction UDP-N-acetyl-alpha-D-muramoyl-L-alanyl-gamma-D-glutamyl-meso-2,6-diaminopimeloyl-D-alanyl-D-alanine + di-trans,octa-cis-undecaprenyl phosphate = di-trans,octa-cis-undecaprenyl diphospho-N-acetyl-alpha-D-muramoyl-L-alanyl-D-glutamyl-meso-2,6-diaminopimeloyl-D-alanyl-D-alanine + UMP. Its pathway is cell wall biogenesis; peptidoglycan biosynthesis. Its function is as follows. Catalyzes the initial step of the lipid cycle reactions in the biosynthesis of the cell wall peptidoglycan: transfers peptidoglycan precursor phospho-MurNAc-pentapeptide from UDP-MurNAc-pentapeptide onto the lipid carrier undecaprenyl phosphate, yielding undecaprenyl-pyrophosphoryl-MurNAc-pentapeptide, known as lipid I. The polypeptide is Phospho-N-acetylmuramoyl-pentapeptide-transferase (Shewanella piezotolerans (strain WP3 / JCM 13877)).